A 255-amino-acid chain; its full sequence is Tabinhibitin 7 (255 aa).

The N-terminal stretch at 1 to 23 (MTSILVSSFLLATLVLQYATIDA) is a signal peptide. A Cell attachment site motif is present at residues 32 to 34 (RGD). The 145-residue stretch at 67–211 (LSKINDVRDH…KARALLTCNF (145 aa)) folds into the SCP domain.

It belongs to the CRISP family. Expressed in salivary glands.

Its subcellular location is the secreted. Its function is as follows. Inhibits platelet aggregation induced by all agonists tested (ADP, arachidonic acid, the thromboxane A2 analog U46619, thrombin, and snake venom snaclecs (TMVA that activates platelet through GPIB, and stejnulxin that specifically acts through GPVI (GP6))). May act by competing with fibrinogen for binding to glycoprotein IIb/IIIa (ITGA2B/ITGB3). In Tabanus yao (Horsefly), this protein is Tabinhibitin 7.